The primary structure comprises 159 residues: MQRVGNTFSNESRVASRCPSVGLAERNRVATMPVRLLRDSPAAQEDNDHARDGFQMKLDAHGFAPEELVVQVDGQWLMVTGQQQLDVRDPERVSYRMSQKVHRKMLPSNLSPTAMTCCLTPSGQLWVRGQCVALALPEAQTGPSPRLGSLGSKASNLTR.

The 112-residue stretch at 36-147 folds into the sHSP domain; the sequence is LLRDSPAAQE…EAQTGPSPRL (112 aa).

This sequence belongs to the small heat shock protein (HSP20) family. In terms of tissue distribution, testis specific.

The protein localises to the cytoplasm. Its subcellular location is the nucleus. This is Heat shock protein beta-9 (HSPB9) from Homo sapiens (Human).